A 313-amino-acid polypeptide reads, in one-letter code: Protein YABBY 3 (313 aa).

The C4-type zinc finger occupies Cys-65 to Cys-92. Disordered regions lie at residues Thr-107 to Asp-149 and Asn-180 to Arg-221. Residues Ala-112–Ala-128 are compositionally biased toward pro residues.

It belongs to the YABBY family. As to expression, expressed in shoot apex and young inflorescences.

Its subcellular location is the nucleus. The chain is Protein YABBY 3 (YAB3) from Oryza sativa subsp. japonica (Rice).